A 564-amino-acid polypeptide reads, in one-letter code: MSSEILQTGLQLVKSAIDADNQKNYSLACNLYDQAVLNLKLALVAEREPSKNALISSKIEEYSQRNKFIKNLLSQQPQSSQPSQPQQSQFSFPSVPSSISPSINQQQQQQQQQINNNNNSILSSFPSAGNTNNNNNNTSNGFSPPNLNKNEQLSKLNSLSIGNNQSTNRQLSRVEAYEAAKNFSLKGRKEEEVKNYRGASQCYEEACNYYLMAIKSEPDPTLKKNLSDEAKIYLDRIEVLKPFAASQPQPQQPQQPQPQQPQQQQFQQQSYNNNNSTQSMLSSFPSFNGSTNSLNNSLNNSNNNFNQILTNSNMPIAQQNFLQNHQFNQSNNSFNNATSSLPLTFSGDKCAACDALLSTNSIKALDRNWHAECFQVSIICAGCQKPFALSNLSLKVKDNRAYHPMCFESTTGLSQEEIRTFVGSSKQLFFSIQLQRKFYRAGETIQFGFTIDNGTTKKVEKVVAYLLMTETRMEITGTAYERKPKRTIKKLGRCEFHHSNRFPLIKDRFEGDFFYSIPPNILPSEVTGVDASFVREYQLIVKCVGPPLKIMTVKLKFNLTILDK.

Over residues 74–146 (SQQPQSSQPS…NTSNGFSPPN (73 aa)) the composition is skewed to low complexity. Disordered stretches follow at residues 74-150 (SQQP…LNKN) and 245-286 (ASQP…SFPS). Residues 250–259 (PQQPQQPQPQ) show a composition bias toward pro residues. Positions 260–269 (QPQQQQFQQQ) are enriched in low complexity. Over residues 270–285 (SYNNNNSTQSMLSSFP) the composition is skewed to polar residues. One can recognise an LIM zinc-binding domain in the interval 348–413 (DKCAACDALL…PMCFESTTGL (66 aa)).

In Dictyostelium discoideum (Social amoeba), this protein is Arrestin domain-containing protein E (adcE).